Consider the following 530-residue polypeptide: Bifunctional purine biosynthesis protein PurH (530 aa).

The region spanning 1–148 is the MGS-like domain; the sequence is MENSRPIKRA…KNHKDVGIVV (148 aa).

It belongs to the PurH family.

The catalysed reaction is (6R)-10-formyltetrahydrofolate + 5-amino-1-(5-phospho-beta-D-ribosyl)imidazole-4-carboxamide = 5-formamido-1-(5-phospho-D-ribosyl)imidazole-4-carboxamide + (6S)-5,6,7,8-tetrahydrofolate. It catalyses the reaction IMP + H2O = 5-formamido-1-(5-phospho-D-ribosyl)imidazole-4-carboxamide. Its pathway is purine metabolism; IMP biosynthesis via de novo pathway; 5-formamido-1-(5-phospho-D-ribosyl)imidazole-4-carboxamide from 5-amino-1-(5-phospho-D-ribosyl)imidazole-4-carboxamide (10-formyl THF route): step 1/1. It participates in purine metabolism; IMP biosynthesis via de novo pathway; IMP from 5-formamido-1-(5-phospho-D-ribosyl)imidazole-4-carboxamide: step 1/1. This chain is Bifunctional purine biosynthesis protein PurH, found in Psychromonas ingrahamii (strain DSM 17664 / CCUG 51855 / 37).